The sequence spans 173 residues: Co-chaperone protein HscB (173 aa).

The region spanning Asp-2–Gln-74 is the J domain.

This sequence belongs to the HscB family. Interacts with HscA and stimulates its ATPase activity. Interacts with IscU.

Co-chaperone involved in the maturation of iron-sulfur cluster-containing proteins. Seems to help targeting proteins to be folded toward HscA. This is Co-chaperone protein HscB from Xenorhabdus nematophila (strain ATCC 19061 / DSM 3370 / CCUG 14189 / LMG 1036 / NCIMB 9965 / AN6).